Reading from the N-terminus, the 222-residue chain is Putative O-methyltransferase MAV_1364 (222 aa).

S-adenosyl-L-methionine contacts are provided by residues Val49, Glu71, 73 to 74 (GT), Ser79, Asp97, and Ile98. Residue Asp145 coordinates substrate. Asp147 contributes to the S-adenosyl-L-methionine binding site.

It belongs to the class I-like SAM-binding methyltransferase superfamily. Cation-dependent O-methyltransferase family.

This Mycobacterium avium (strain 104) protein is Putative O-methyltransferase MAV_1364.